Consider the following 221-residue polypeptide: N-(5'-phosphoribosyl)anthranilate isomerase (221 aa).

The protein belongs to the TrpF family.

It carries out the reaction N-(5-phospho-beta-D-ribosyl)anthranilate = 1-(2-carboxyphenylamino)-1-deoxy-D-ribulose 5-phosphate. It participates in amino-acid biosynthesis; L-tryptophan biosynthesis; L-tryptophan from chorismate: step 3/5. The chain is N-(5'-phosphoribosyl)anthranilate isomerase from Chlorobaculum parvum (strain DSM 263 / NCIMB 8327) (Chlorobium vibrioforme subsp. thiosulfatophilum).